A 259-amino-acid polypeptide reads, in one-letter code: UPF0246 protein VF_2109 (259 aa).

This sequence belongs to the UPF0246 family.

This chain is UPF0246 protein VF_2109, found in Aliivibrio fischeri (strain ATCC 700601 / ES114) (Vibrio fischeri).